The sequence spans 220 residues: Deoxyribose-phosphate aldolase (220 aa).

The Proton donor/acceptor role is filled by Asp-89. The active-site Schiff-base intermediate with acetaldehyde is Lys-151. Residue Lys-180 is the Proton donor/acceptor of the active site.

It belongs to the DeoC/FbaB aldolase family. DeoC type 1 subfamily.

The protein localises to the cytoplasm. It catalyses the reaction 2-deoxy-D-ribose 5-phosphate = D-glyceraldehyde 3-phosphate + acetaldehyde. It participates in carbohydrate degradation; 2-deoxy-D-ribose 1-phosphate degradation; D-glyceraldehyde 3-phosphate and acetaldehyde from 2-deoxy-alpha-D-ribose 1-phosphate: step 2/2. Functionally, catalyzes a reversible aldol reaction between acetaldehyde and D-glyceraldehyde 3-phosphate to generate 2-deoxy-D-ribose 5-phosphate. This is Deoxyribose-phosphate aldolase from Streptococcus pneumoniae serotype 2 (strain D39 / NCTC 7466).